The chain runs to 222 residues: MTEHKCIAIDGPAGAGKSTVAKKVAQKLNLLYIDTGAMYRAVTLKALRERINLWDDIALIELAKRTIITLLAGQKQSVLLDGLDVTREIRTPEVTNNVSIVAKIAGVREVLVQRQREMAEEAGVVMDGRDIGTVVLPKAKAKFFLTASAEERARRRAKEMMNFGYDVDLEQLIKEIEERDFMDSNRAVSPLVPAEDAVLIDSSGMTIDEVVNSIITWVEKGK.

11 to 19 is an ATP binding site; the sequence is GPAGAGKST.

This sequence belongs to the cytidylate kinase family. Type 1 subfamily.

It is found in the cytoplasm. The enzyme catalyses CMP + ATP = CDP + ADP. It catalyses the reaction dCMP + ATP = dCDP + ADP. The polypeptide is Cytidylate kinase (Desulforamulus reducens (strain ATCC BAA-1160 / DSM 100696 / MI-1) (Desulfotomaculum reducens)).